We begin with the raw amino-acid sequence, 931 residues long: Protein phosphatase 1 regulatory subunit 37 homolog (931 aa).

The tract at residues 20–71 (TAASSPASPIPPTSPSMFATPPHQQSHSSATSVRKKVCQEANSSADDPDSDA) is disordered. Positions 41 to 51 (PHQQSHSSATS) are enriched in polar residues. LRR repeat units follow at residues 232–259 (AISLQMLNLRYTNLNDRSIPSLCKLARA), 262–285 (SASLTCIHLENTQMSGKNLLVLIC), 290–314 (NTGIRELYLGDNGLQPTDGSHIYQL), 323–346 (LLDLRNNNIGDSGVRHICEGLRNR), 351–374 (KSALSAMVLWNNNVTGASMDSLAE), 379–407 (NTKIETLNIGSNNLGVEGVARLKPALVSN), 409–430 (HLHRLGLQNTGINCEGAIILAE), and 435–458 (NTALLRVDIRDNPIALAGLLALHS). Residues 519-533 (QDHVSEDTEKENKDA) show a composition bias toward basic and acidic residues. Disordered stretches follow at residues 519 to 602 (QDHV…RHQR) and 780 to 807 (PDCTNTCEEPTTSREAERKRAEETIRQR). Residues 534–547 (DNDDKEPENEDGDT) are compositionally biased toward acidic residues. The span at 554-563 (SDASADQSDS) shows a compositional bias: low complexity. Composition is skewed to basic and acidic residues over residues 564–584 (PADKEKSEKSKKENNNNEKRP) and 790–807 (TTSREAERKRAEETIRQR).

Belongs to the PPP1R37 family.

The protein is Protein phosphatase 1 regulatory subunit 37 homolog of Caenorhabditis briggsae.